Here is a 468-residue protein sequence, read N- to C-terminus: Putative magnesium transporter MRS2-G (468 aa).

Disordered regions lie at residues 1 to 76 (MGRR…AGKV) and 182 to 205 (NGQP…VPRL). Low complexity-rich tracts occupy residues 14–23 (ASNASTSSST) and 31–45 (RLPS…SSPS). Over residues 46 to 67 (PASPSPPPPSASHPAPPSPPLA) the composition is skewed to pro residues. Over residues 187-197 (GDDHGEKHDDS) the composition is skewed to basic and acidic residues. The next 2 helical transmembrane spans lie at 402–422 (LTLT…GAFA) and 437–457 (FFWP…IVLL).

This sequence belongs to the CorA metal ion transporter (MIT) (TC 1.A.35.5) family.

It localises to the membrane. Putative magnesium transporter. The chain is Putative magnesium transporter MRS2-G (MRS2-G) from Oryza sativa subsp. indica (Rice).